Here is a 404-residue protein sequence, read N- to C-terminus: Propionate kinase (404 aa).

It belongs to the acetokinase family. PduW subfamily.

It is found in the cytoplasm. It carries out the reaction propanoate + ATP = propanoyl phosphate + ADP. Its pathway is polyol metabolism; 1,2-propanediol degradation. Functionally, works with phosphate acetyltransferase (pta) to capture exogenous propionate and regenerate propionyl-CoA during degradation of 1,2-propanediol (1,2-PD). Its function is as follows. Expression of a cosmid containing the full 21-gene pdu operon in E.coli allows E.coli to grow on 1,2-propanediol (1,2-PD) with the appearance of bacterial microcompartments (BMC) in its cytoplasm. In Citrobacter freundii, this protein is Propionate kinase.